Here is a 209-residue protein sequence, read N- to C-terminus: Superoxide dismutase [Mn/Fe] (209 aa).

Fe(3+) is bound by residues histidine 38, histidine 90, aspartate 172, and histidine 176. Mn(2+) is bound by residues histidine 38, histidine 90, aspartate 172, and histidine 176.

Belongs to the iron/manganese superoxide dismutase family. Mn(2+) is required as a cofactor. It depends on Fe(3+) as a cofactor.

It carries out the reaction 2 superoxide + 2 H(+) = H2O2 + O2. Its function is as follows. Destroys superoxide anion radicals which are normally produced within the cells and which are toxic to biological systems. Catalyzes the dismutation of superoxide anion radicals into O2 and H2O2 by successive reduction and oxidation of the transition metal ion at the active site. The chain is Superoxide dismutase [Mn/Fe] (sodB) from Rickettsia bellii (strain RML369-C).